A 239-amino-acid polypeptide reads, in one-letter code: Purine nucleoside phosphorylase DeoD-type (239 aa).

Position 5 (His-5) interacts with a purine D-ribonucleoside. Residues Gly-21, Arg-25, Arg-44, and 88 to 91 (RVGS) contribute to the phosphate site. A purine D-ribonucleoside contacts are provided by residues 180 to 182 (EME) and 204 to 205 (SD). Asp-205 (proton donor) is an active-site residue.

It belongs to the PNP/UDP phosphorylase family. In terms of assembly, homohexamer; trimer of homodimers.

The catalysed reaction is a purine D-ribonucleoside + phosphate = a purine nucleobase + alpha-D-ribose 1-phosphate. It carries out the reaction a purine 2'-deoxy-D-ribonucleoside + phosphate = a purine nucleobase + 2-deoxy-alpha-D-ribose 1-phosphate. Catalyzes the reversible phosphorolytic breakdown of the N-glycosidic bond in the beta-(deoxy)ribonucleoside molecules, with the formation of the corresponding free purine bases and pentose-1-phosphate. The chain is Purine nucleoside phosphorylase DeoD-type from Citrobacter koseri (strain ATCC BAA-895 / CDC 4225-83 / SGSC4696).